The sequence spans 292 residues: MEITASLVKELRERTGVGMMECKKALSENAGNIDASVEWLRKSGLVKADKKAGRIAAEGRIVVVHDGCKAVLVEINSETDFVAKDSHFLAFAEAVAQAALVAGAADVEALKHVKLPSGETVEETRAAVIAKIGENVRVRRLARIDSANNVAAYVHGGRIGVLVEVKGGDVELARGIAMHVAAMNPPYNKVADVSAEFLEKEKEIELSKMSEKDKSKPADILEKIISGKINKIVKEVTLYGQPYVLNPDQSVEQVVKAAGADVIGFQRMEVGEGIEKIVEDYASEVMKQAGLS.

The segment at 79–82 (TDFV) is involved in Mg(2+) ion dislocation from EF-Tu.

This sequence belongs to the EF-Ts family.

It is found in the cytoplasm. Associates with the EF-Tu.GDP complex and induces the exchange of GDP to GTP. It remains bound to the aminoacyl-tRNA.EF-Tu.GTP complex up to the GTP hydrolysis stage on the ribosome. This Xylella fastidiosa (strain Temecula1 / ATCC 700964) protein is Elongation factor Ts.